The primary structure comprises 416 residues: Multifunctional CCA protein (416 aa).

The ATP site is built by Gly8 and Arg11. Gly8 and Arg11 together coordinate CTP. Mg(2+) is bound by residues Asp21 and Asp23. ATP is bound by residues Arg91, Arg138, and Arg141. Residues Arg91, Arg138, and Arg141 each coordinate CTP. The 103-residue stretch at 229–331 (TGLHQELVSD…YELLQRCDAF (103 aa)) folds into the HD domain.

The protein belongs to the tRNA nucleotidyltransferase/poly(A) polymerase family. Bacterial CCA-adding enzyme type 1 subfamily. As to quaternary structure, monomer. Can also form homodimers and oligomers. Requires Mg(2+) as cofactor. The cofactor is Ni(2+).

The enzyme catalyses a tRNA precursor + 2 CTP + ATP = a tRNA with a 3' CCA end + 3 diphosphate. It catalyses the reaction a tRNA with a 3' CCA end + 2 CTP + ATP = a tRNA with a 3' CCACCA end + 3 diphosphate. Its function is as follows. Catalyzes the addition and repair of the essential 3'-terminal CCA sequence in tRNAs without using a nucleic acid template. Adds these three nucleotides in the order of C, C, and A to the tRNA nucleotide-73, using CTP and ATP as substrates and producing inorganic pyrophosphate. tRNA 3'-terminal CCA addition is required both for tRNA processing and repair. Also involved in tRNA surveillance by mediating tandem CCA addition to generate a CCACCA at the 3' terminus of unstable tRNAs. While stable tRNAs receive only 3'-terminal CCA, unstable tRNAs are marked with CCACCA and rapidly degraded. The sequence is that of Multifunctional CCA protein from Xylella fastidiosa (strain 9a5c).